Consider the following 437-residue polypeptide: MPESMDAIILKDVVKSFRKRTIRGEYTTFKSELLRWLRGKRQSRDASLITALRGINLTIPKGKTVGIIGRNGSGKSTLLKLITGIYTPTSGDLQINGRISALLDLGAGFHPDFSGRENILINGIILGMTRAEVRARMDEIIAFSELGEFIDEPVRTYSSGMYMRLAFAVATHVDPDILIIDEILAVGDEHFSKKSLAKMMDFKRQGKTIVLVTHELGTVERWCDLAAWIDGGYVRRVGKPSEVTAEYREAISLAEAQSAAFTPPALTEGGGALPQVPSESLPAEGPVRIHRVQLLDARGESLEVLSPEEGLEVRADFSVEGPCEDVDFHVRLQAADGRTLYETSTRSEAVVLSRMPNPGVLRFVVERLGALGGDYSLVVSARASKGESSGRCAFRVVSATEEEGVFRPPHRWLVEPGANSQAGVRFEPGTSPRVEVG.

The ABC transporter domain occupies 37 to 256 (LRGKRQSRDA…YREAISLAEA (220 aa)). An ATP-binding site is contributed by 69 to 76 (GRNGSGKS).

The protein belongs to the ABC transporter superfamily.

It is found in the cell inner membrane. Its function is as follows. May form an ATP-driven O-antigen export apparatus, in association with RfbA. The polypeptide is O-antigen export system ATP-binding protein RfbB (rfbB) (Myxococcus xanthus).